Here is a 231-residue protein sequence, read N- to C-terminus: MTGAATAAENSATQLEFYRKALNFNVIGRYDPKIKQLLFHTPHASLYKWDFKKDEWNKLEYQGVLAIYLRDVSQNTNLLPVSPQEVDIFDSQNGSNNIQVNNGSDNSNRNSSGNGNSYKSNDSLTYNCGKTLSGKDIYNYGLIILNRINPDNFSMGIVPNSVVNKRKVFNAEEDTLNPLECMGVEVKDELVIIKNLKHEVYGIWIHTVSDRQNIYELIKYLLENEPKDSFA.

The interval 92-120 (QNGSNNIQVNNGSDNSNRNSSGNGNSYKS) is disordered. A compositionally biased stretch (low complexity) spans 101-120 (NNGSDNSNRNSSGNGNSYKS).

The protein belongs to the DCP1 family. Component of the decapping complex composed of DCP1 and DCP2. Interacts with mRNAs, DHH1, LSM1, LSM2, LSM3, LSM4, LSM5, LSM6, LSM7, and the cap-binding proteins PAB1 and TIF4632/eIF-4G. Phosphorylated.

Its subcellular location is the cytoplasm. It localises to the P-body. In terms of biological role, component of the decapping complex necessary for the degradation of mRNAs, both in normal mRNA turnover and in nonsense-mediated mRNA decay. Removes the 7-methyl guanine cap structure from mRNA molecules, yielding a 5'-phosphorylated mRNA fragment and 7m-GDP. Decapping is the major pathway of mRNA degradation in yeast. It occurs through deadenylation, decapping and subsequent 5' to 3' exonucleolytic decay of the transcript body. DCP1 is activated by the DEAD-box helicase DHH1 and destabilizes the eIF-4F cap-binding complex from the mRNA. This is mRNA-decapping enzyme subunit 1 (DCP1) from Saccharomyces cerevisiae (strain ATCC 204508 / S288c) (Baker's yeast).